Reading from the N-terminus, the 153-residue chain is Endoribonuclease YbeY (153 aa).

3 residues coordinate Zn(2+): histidine 116, histidine 120, and histidine 126.

The protein belongs to the endoribonuclease YbeY family. The cofactor is Zn(2+).

It localises to the cytoplasm. Single strand-specific metallo-endoribonuclease involved in late-stage 70S ribosome quality control and in maturation of the 3' terminus of the 16S rRNA. This is Endoribonuclease YbeY from Leifsonia xyli subsp. xyli (strain CTCB07).